We begin with the raw amino-acid sequence, 280 residues long: Hemin import ATP-binding protein HmuV (280 aa).

An ABC transporter domain is found at 26–260; that stretch reads LAAAGGLRVH…GLLSEVYDQP (235 aa). 59-66 is a binding site for ATP; sequence GPNGAGKS.

This sequence belongs to the ABC transporter superfamily. Heme (hemin) importer (TC 3.A.1.14.5) family. The complex is composed of two ATP-binding proteins (HmuV), two transmembrane proteins (HmuU) and a solute-binding protein (HmuT).

It localises to the cell membrane. In terms of biological role, part of the ABC transporter complex HmuTUV involved in hemin import. Responsible for energy coupling to the transport system. This chain is Hemin import ATP-binding protein HmuV, found in Streptomyces coelicolor (strain ATCC BAA-471 / A3(2) / M145).